The following is a 503-amino-acid chain: ATP synthase subunit alpha (503 aa).

Residue 170–177 (GDRQTGKT) coordinates ATP.

Belongs to the ATPase alpha/beta chains family. F-type ATPases have 2 components, CF(1) - the catalytic core - and CF(0) - the membrane proton channel. CF(1) has five subunits: alpha(3), beta(3), gamma(1), delta(1), epsilon(1). CF(0) has three main subunits: a(1), b(2) and c(9-12). The alpha and beta chains form an alternating ring which encloses part of the gamma chain. CF(1) is attached to CF(0) by a central stalk formed by the gamma and epsilon chains, while a peripheral stalk is formed by the delta and b chains.

Its subcellular location is the cell inner membrane. The catalysed reaction is ATP + H2O + 4 H(+)(in) = ADP + phosphate + 5 H(+)(out). In terms of biological role, produces ATP from ADP in the presence of a proton gradient across the membrane. The alpha chain is a regulatory subunit. This Thermotoga maritima (strain ATCC 43589 / DSM 3109 / JCM 10099 / NBRC 100826 / MSB8) protein is ATP synthase subunit alpha.